The chain runs to 75 residues: Putative membrane protein insertion efficiency factor 2 (75 aa).

It belongs to the UPF0161 family.

Its subcellular location is the cell membrane. Could be involved in insertion of integral membrane proteins into the membrane. This is Putative membrane protein insertion efficiency factor 2 from Bacillus licheniformis (strain ATCC 14580 / DSM 13 / JCM 2505 / CCUG 7422 / NBRC 12200 / NCIMB 9375 / NCTC 10341 / NRRL NRS-1264 / Gibson 46).